A 490-amino-acid polypeptide reads, in one-letter code: Hippocampus abundant transcript 1 protein (490 aa).

The residue at position 1 (methionine 1) is an N-acetylmethionine. Over 1–40 (MTQGKKKKRAANRSIMLAKKIIIKDGGTPQGIGSPSVYHA) the chain is Extracellular. An N-linked (GlcNAc...) asparagine glycan is attached at asparagine 12. A helical membrane pass occupies residues 41-61 (VIVIFLEFFAWGLLTAPTLVV). Over 62–74 (LHETFPKHTFLMN) the chain is Cytoplasmic. A helical membrane pass occupies residues 75–95 (GLIQGVKGLLSFLSAPLIGAL). Residues 96 to 103 (SDVWGRKS) are Extracellular-facing. The helical transmembrane segment at 104-124 (FLLLTVFFTCAPIPLMKISPW) threads the bilayer. Over 125–126 (WY) the chain is Cytoplasmic. Residues 127 to 147 (FAVISVSGVFAVTFSVVFAYV) traverse the membrane as a helical segment. The Extracellular segment spans residues 148-160 (ADITQEHERSMAY). The chain crosses the membrane as a helical span at residues 161–181 (GLVSATFAASLVTSPAIGAYL). At 182-188 (GRVYGDS) the chain is on the cytoplasmic side. Residues 189-209 (LVVVLATAIALLDICFILVAV) traverse the membrane as a helical segment. The Extracellular portion of the chain corresponds to 210–243 (PESLPEKMRPASWGAPISWEQADPFASLKKVGQD). A helical membrane pass occupies residues 244–264 (SIVLLICITVFLSYLPEAGQY). Topologically, residues 265 to 284 (SSFFLYLRQIMKFSPESVAA) are cytoplasmic. Residues 285-305 (FIAVLGILSIIAQTIVLSLLM) form a helical membrane-spanning segment. Residues 306–313 (RSIGNKNT) are Extracellular-facing. The chain crosses the membrane as a helical span at residues 314 to 334 (ILLGLGFQILQLAWYGFGSEP). At 335 to 337 (WMM) the chain is on the cytoplasmic side. A helical transmembrane segment spans residues 338 to 358 (WAAGAVAAMSSITFPAVSALV). At 359 to 379 (SRTADADQQGVVQGMITGIRG) the chain is on the extracellular side. The helical transmembrane segment at 380–400 (LCNGLGPALYGFIFYIFHVEL) threads the bilayer. The Cytoplasmic segment spans residues 401–427 (KELPITGTDLGTNTSPQHHFEQNSIIP). A helical membrane pass occupies residues 428-448 (GPPFLFGACSVLLALLVALFI). Over 449–490 (PEHTNLSLRSSSWRKHCGSHSHPHNTQAPGEAKEPLLQDTNV) the chain is Extracellular. An N-linked (GlcNAc...) asparagine glycan is attached at asparagine 453. The tract at residues 465–490 (CGSHSHPHNTQAPGEAKEPLLQDTNV) is disordered.

Belongs to the major facilitator superfamily.

The protein resides in the membrane. In Homo sapiens (Human), this protein is Hippocampus abundant transcript 1 protein.